A 294-amino-acid polypeptide reads, in one-letter code: N-acetylmuramic acid 6-phosphate etherase (294 aa).

The SIS domain maps to 54 to 217 (VIKSFEEEGR…STASMIGVGK (164 aa)). The active-site Proton donor is E82. Residue E113 is part of the active site.

It belongs to the GCKR-like family. MurNAc-6-P etherase subfamily. Homodimer.

It catalyses the reaction N-acetyl-D-muramate 6-phosphate + H2O = N-acetyl-D-glucosamine 6-phosphate + (R)-lactate. The protein operates within amino-sugar metabolism; N-acetylmuramate degradation. Functionally, specifically catalyzes the cleavage of the D-lactyl ether substituent of MurNAc 6-phosphate, producing GlcNAc 6-phosphate and D-lactate. This is N-acetylmuramic acid 6-phosphate etherase from Bacillus cereus (strain B4264).